The sequence spans 145 residues: MAALGWLPGIRIDQAESWEDVGIIKEAVNLAEEKATAKTSVLLEETRIFEAPKDLAENSNVMKWMKEKGFKTEREMRLWCSANYIQFWGEMAKTYADWFEPWSSTLEWKPPYAKWFVGGKCNVTHNCVDRHAQGAKKIRWPYIRA.

This is an uncharacterized protein from Methanothrix soehngenii (Methanosaeta concilii).